The following is a 968-amino-acid chain: RNA polymerase-associated protein RapA (968 aa).

A Helicase ATP-binding domain is found at 163–332 (EVGSRYAPRV…FARLRLLDPD (170 aa)). An ATP-binding site is contributed by 176-183 (DEVGLGKT). Positions 278 to 281 (DEAH) match the DEAH box motif. In terms of domain architecture, Helicase C-terminal spans 491 to 655 (RVDWLIEFLK…EFADELINVL (165 aa)).

Belongs to the SNF2/RAD54 helicase family. RapA subfamily. In terms of assembly, interacts with the RNAP. Has a higher affinity for the core RNAP than for the holoenzyme. Its ATPase activity is stimulated by binding to RNAP.

Functionally, transcription regulator that activates transcription by stimulating RNA polymerase (RNAP) recycling in case of stress conditions such as supercoiled DNA or high salt concentrations. Probably acts by releasing the RNAP, when it is trapped or immobilized on tightly supercoiled DNA. Does not activate transcription on linear DNA. Probably not involved in DNA repair. The polypeptide is RNA polymerase-associated protein RapA (Shewanella frigidimarina (strain NCIMB 400)).